The sequence spans 566 residues: Transcriptional regulatory protein XylR (566 aa).

The 230-residue stretch at 235–464 (GIGHSPAYKR…LENALERGVI (230 aa)) folds into the Sigma-54 factor interaction domain. Residues 263–270 (GETGVGKE) and 326–335 (ANGGTIFLDE) contribute to the ATP site. The segment at residues 534–553 (ISQAARLLGLTRPAMAYRLK) is a DNA-binding region (H-T-H motif).

Functionally, regulatory protein of the TOL plasmid xyl operons. In the presence of m-xylene or m-methylbenzyl alcohol XylR activates both the xylCMABN operon and the regulatory gene xylS; xylS itself activates the xylXYZLTEGFJQKIH operon. XylR interacts with sigma-54. The protein is Transcriptional regulatory protein XylR (xylR) of Pseudomonas putida (Arthrobacter siderocapsulatus).